A 539-amino-acid polypeptide reads, in one-letter code: Nucleobase-ascorbate transporter 8 (539 aa).

The segment at 1 to 20 (MAGDGVENAKPPQKQEDLQP) is disordered. A run of 12 helical transmembrane segments spans residues 44–64 (ILLGFQHYLVMLGTTVLIPTM), 79–99 (LIQTLLFVSGINTLFQSFFGT), 101–121 (LPAVIGASYSYVPTTMSIVLA), 141–161 (IQGALIIASFLHILVGFSGLW), 167–187 (FLSPLSAVPLVAFSGFGLYEQ), 189–209 (FPMLAKCIEIGLPEIILLVIF), 229–249 (FAVIFSVVIVWLYAYILTIGG), 295–315 (IFAMMAASFVSLVESTGTYIA), 368–388 (VGSRRVIQVAAGFMIFFSILG), 399–421 (APIVAALYCLFFSYVGAGGLSLI), 433–453 (FILGFSIFMGLSIPQYFYQYT), and 470–490 (NIINVPFSSKAFVSGILAFFL).

It belongs to the nucleobase:cation symporter-2 (NCS2) (TC 2.A.40) family. In terms of tissue distribution, highly expressed in ovules, endosperm and embryo.

It localises to the cell membrane. The sequence is that of Nucleobase-ascorbate transporter 8 (NAT8) from Arabidopsis thaliana (Mouse-ear cress).